The sequence spans 198 residues: MLYPTPIAKLIDSYSKLPGIGIKTATRLAFYTIGMSADDVNEFAKNLLSAKRELTYCSICGRLTDDDPCSICTDPTRDQTTILVLEDSRDVAAMENIQEYHGLYHVLHGLISPMNGISPDDINLKSLMTRLMDSEVSEVIVATNATADGEATSMYLSRLLKPAGIKVTRLARGLAVGADIEYADEVTLLRAIENRTEL.

The C4-type zinc-finger motif lies at 57–72 (CSICGRLTDDDPCSIC). Residues 80-175 (TTILVLEDSR…KVTRLARGLA (96 aa)) enclose the Toprim domain.

The protein belongs to the RecR family.

In terms of biological role, may play a role in DNA repair. It seems to be involved in an RecBC-independent recombinational process of DNA repair. It may act with RecF and RecO. The protein is Recombination protein RecR of Streptococcus pneumoniae serotype 2 (strain D39 / NCTC 7466).